The primary structure comprises 194 residues: Flagellar transcriptional regulator FlhC (194 aa).

Cysteine 139, cysteine 142, cysteine 159, and cysteine 162 together coordinate Zn(2+).

The protein belongs to the FlhC family. In terms of assembly, heterohexamer composed of two FlhC and four FlhD subunits. Each FlhC binds a FlhD dimer, forming a heterotrimer, and a hexamer assembles by dimerization of two heterotrimers. Requires Zn(2+) as cofactor.

It localises to the cytoplasm. Functions in complex with FlhD as a master transcriptional regulator that regulates transcription of several flagellar and non-flagellar operons by binding to their promoter region. Activates expression of class 2 flagellar genes, including fliA, which is a flagellum-specific sigma factor that turns on the class 3 genes. Also regulates genes whose products function in a variety of physiological pathways. This Serratia marcescens protein is Flagellar transcriptional regulator FlhC.